The primary structure comprises 276 residues: Phosphatidylcholine synthase (276 aa).

Residues 1–30 (MGGQKEMADSVKTKLTGKLKAKKVTAPQAK) lie on the Cytoplasmic side of the membrane. The helical transmembrane segment at 31 to 51 (AFSVHLLTASGSFLAFLSVVA) threads the bilayer. Residues 52–57 (ASDGRY) lie on the Periplasmic side of the membrane. The helical transmembrane segment at 58–78 (TAMWWWLGLALFVDGIDGPIA) threads the bilayer. Residues 79–91 (RKLEVKYVLPNWS) lie on the Cytoplasmic side of the membrane. The chain crosses the membrane as a helical span at residues 92-112 (GELLDSIIDYVTYVLIPAFAL). The Periplasmic segment spans residues 113–115 (YQS). A helical membrane pass occupies residues 116-136 (GFMGTNLSFISGAIIVVSSAI). Topologically, residues 137–146 (YYADTGMKTK) are cytoplasmic. A helical transmembrane segment spans residues 147-167 (ENFFKGFPVVWNMVVFTLFIV). Over 168–171 (RPGE) the chain is Periplasmic. The chain crosses the membrane as a helical span at residues 172–192 (WVAFGTVVASAILSFLPINFL). The Cytoplasmic portion of the chain corresponds to 193 to 202 (HPVRVVRLRP). The chain crosses the membrane as a helical span at residues 203–223 (LNLTIFLLWCAFGVIALYYML). Residues 224–230 (DAPLWVR) lie on the Periplasmic side of the membrane. Residues 231-251 (IGISVTGLYIYFIGAIMQLFP) form a helical membrane-spanning segment. The Cytoplasmic segment spans residues 252 to 276 (SLGREAALAKARKLVEKQQKSGEAP).

Belongs to the CDP-alcohol phosphatidyltransferase class-I family. Mn(2+) is required as a cofactor.

The protein localises to the cell inner membrane. It carries out the reaction a CDP-1,2-diacyl-sn-glycerol + choline = a 1,2-diacyl-sn-glycero-3-phosphocholine + CMP + H(+). Functionally, condenses choline with CDP-diglyceride to produce phosphatidylcholine and CMP. This chain is Phosphatidylcholine synthase, found in Brucella melitensis biotype 1 (strain ATCC 23456 / CCUG 17765 / NCTC 10094 / 16M).